The chain runs to 703 residues: Zinc finger CCCH domain-containing protein 36 (703 aa).

4 disordered regions span residues 1-42, 112-176, 204-242, and 442-481; these read MAGG…DPNG, LQLH…MKNK, VSGSDNQVYGNHGGTGEGSEIQHPSSSKEHQFKNSAGSS, and HGTLPLHQLTPDKDASHHKGADFDKGGTSRSTLHVSSSSQ. The segment covering 9–25 has biased composition (low complexity); it reads GLPAAGEAAKAGRVGVG. The span at 112-125 shows a compositional bias: basic and acidic residues; it reads LQLHGDEKYQKKAG. Positions 149–169 are enriched in polar residues; that stretch reads VSQSPPDSNALSSQRFGSSSP. The segment at 176–203 adopts a C3H1-type zinc-finger fold; that stretch reads KTRKRTCTFYAQGRCKNGKSCTFLHEGE. A compositionally biased stretch (basic and acidic residues) spans 451 to 468; that stretch reads TPDKDASHHKGADFDKGG. The span at 470–481 shows a compositional bias: low complexity; sequence SRSTLHVSSSSQ.

This is Zinc finger CCCH domain-containing protein 36 from Oryza sativa subsp. japonica (Rice).